We begin with the raw amino-acid sequence, 926 residues long: Isoleucine--tRNA ligase (926 aa).

Residues 1-21 (MKMKETLQLGKTAFPMRGNLP) form a disordered region. A 'HIGH' region motif is present at residues 57–67 (PYANGNIHLGH). Glu-552 is a binding site for L-isoleucyl-5'-AMP. Positions 593–597 (KMSKS) match the 'KMSKS' region motif. Lys-596 serves as a coordination point for ATP. The Zn(2+) site is built by Cys-886, Cys-889, Cys-906, and Cys-909.

This sequence belongs to the class-I aminoacyl-tRNA synthetase family. IleS type 1 subfamily. As to quaternary structure, monomer. The cofactor is Zn(2+).

The protein resides in the cytoplasm. The enzyme catalyses tRNA(Ile) + L-isoleucine + ATP = L-isoleucyl-tRNA(Ile) + AMP + diphosphate. In terms of biological role, catalyzes the attachment of isoleucine to tRNA(Ile). As IleRS can inadvertently accommodate and process structurally similar amino acids such as valine, to avoid such errors it has two additional distinct tRNA(Ile)-dependent editing activities. One activity is designated as 'pretransfer' editing and involves the hydrolysis of activated Val-AMP. The other activity is designated 'posttransfer' editing and involves deacylation of mischarged Val-tRNA(Ile). This is Isoleucine--tRNA ligase from Enterococcus faecalis (strain ATCC 700802 / V583).